An 86-amino-acid chain; its full sequence is Alpha-mammal toxin Ts3 (86 aa).

Positions 1-19 (MNYFILLVVVCLLTAGTEG) are cleaved as a signal peptide. Positions 21-82 (KDGYPVEYDN…EPTKTNGKCK (62 aa)) constitute an LCN-type CS-alpha/beta domain. Cystine bridges form between C31–C81, C35–C57, C43–C64, and C47–C66. At S83 the chain carries Serine amide.

In terms of tissue distribution, expressed by the venom gland.

It localises to the secreted. Functionally, alpha toxins bind voltage-independently at site-3 of sodium channels (Nav) and inhibit the inactivation of the activated channels, thereby blocking neuronal transmission. This synthetic toxin inhibits inactivation of rat Nav1.4/SCN4A (when tested at 201 nM). In addition, it has been shown to cause a persistent sodium channel activation in nitrergic inhibitory fibers innervating the rabbit corpus cavernosum, resulting in NO release and cavernosal smooth muscle relaxation. This toxin is active against mammals. This synthetic peptide with a Ser at position 31 (C12S) acts as a bradykinin-potentiating peptide (BPP). Induces endothelium-dependent vasodilation that is reverted by NO synthase inhibitor, suggesting it activates molecular targets on vascular endothelium leading to NO production and vasodilation. It appears to induce vasodilation through muscarinic acetylcholine receptors (AChR) M2 (CHRM2) and M3 (CHRM3). Does not inhibit the angiotensin-converting enzyme (ACE). Does not act via bradykinin B2 receptor. The chain is Alpha-mammal toxin Ts3 from Tityus serrulatus (Brazilian scorpion).